We begin with the raw amino-acid sequence, 591 residues long: Protein phosphatase EYA1 (591 aa).

3 disordered regions span residues 1–95 (MEMQ…SYPH), 150–169 (GLSQ…GTSF), and 239–319 (MTSS…PDSD). Low complexity predominate over residues 8-23 (SPHSRLSGSSESPSGP). Polar residues predominate over residues 28-53 (SHINSTSMTPNGTEVKTEPMSSSEIA). Positions 56–75 (AADGSLDSFSGSALGSSSFS) are enriched in low complexity. The segment covering 78–87 (PAHPFSPPQI) has biased composition (pro residues). Residues 240–252 (TSSNTSPTTPSTN) are compositionally biased toward low complexity. The segment covering 253 to 286 (ATYQLQEPPSGVTSQAVTDPTAEYSTIHSPSTPI) has biased composition (polar residues). A compositionally biased stretch (basic and acidic residues) spans 287 to 302 (KETDSERLRRGSDGKS). Catalysis depends on aspartate 327, which acts as the Nucleophile. Aspartate 327, aspartate 329, and aspartate 555 together coordinate Mg(2+). The Proton donor role is filled by aspartate 329.

Belongs to the HAD-like hydrolase superfamily. EYA family. In terms of assembly, probably interacts with SIX2, SIX4 and SIX5. Interacts with H2AX in response to DNA damage. Interacts with SIX3; promotes EYA1 translocation to the nucleus. Requires Mg(2+) as cofactor. In terms of processing, sumoylated with SUMO1. As to expression, extensively expressed in cranial placodes, branchial arches, CNS and developing eye and nose.

The protein localises to the cytoplasm. It is found in the nucleus. The enzyme catalyses O-phospho-L-tyrosyl-[protein] + H2O = L-tyrosyl-[protein] + phosphate. It carries out the reaction O-phospho-L-seryl-[protein] + H2O = L-seryl-[protein] + phosphate. The catalysed reaction is O-phospho-L-threonyl-[protein] + H2O = L-threonyl-[protein] + phosphate. In terms of biological role, functions both as protein phosphatase and as transcriptional coactivator for SIX1, and probably also for SIX2, SIX4 and SIX5. Tyrosine phosphatase that dephosphorylates 'Tyr-142' of histone H2AX (H2AXY142ph) and promotes efficient DNA repair via the recruitment of DNA repair complexes containing MDC1. 'Tyr-142' phosphorylation of histone H2AX plays a central role in DNA repair and acts as a mark that distinguishes between apoptotic and repair responses to genotoxic stress. Its function as histone phosphatase may contribute to its function in transcription regulation during organogenesis. Also has phosphatase activity with proteins phosphorylated on Ser and Thr residues (in vitro). Required for normal embryonic development of the craniofacial and trunk skeleton, kidneys and ears. Together with SIX1, it plays an important role in hypaxial muscle development; in this it is functionally redundant with EYA2. The sequence is that of Protein phosphatase EYA1 (Eya1) from Mus musculus (Mouse).